We begin with the raw amino-acid sequence, 843 residues long: Major vault protein alpha (843 aa).

A2 bears the N-acetylalanine mark. MVP repeat units lie at residues 2-56 (ADLN…IPQR), 57-111 (NYCT…KVTA), 112-163 (LQVV…EEIK), 164-216 (ATII…EIVN), 217-272 (AYVL…GEVH), 273-324 (ITTL…IHNI), 325-376 (YVLT…KRES), 377-442 (IPLD…STRV), and 443-505 (VTYR…FLGP). Residues 643-663 (QEAAARHEAERLEQGARGRLE) form a disordered region. Residues 646 to 663 (AARHEAERLEQGARGRLE) show a composition bias toward basic and acidic residues.

The vault ribonucleoprotein particle is a huge (400 A x 670 A) cage structure of 12.9 MDa. It consists of a dimer of half-vaults, with each half-vault comprising 39 identical major vault protein (MVP) chains. Dictyostelium is one of the few organisms in which the major component is actually two proteins (alpha and beta).

It is found in the cytoplasm. Its subcellular location is the nucleus. Functionally, unknown, though MVP-alpha is required for normal vault structure. The sequence is that of Major vault protein alpha (mvpA) from Dictyostelium discoideum (Social amoeba).